The chain runs to 476 residues: FAD-dependent monooxygenase ausM (476 aa).

3 residues coordinate FAD: E41, G55, and R114. The active site involves Y222. Residues D314 and A327 each coordinate FAD. The chain crosses the membrane as a helical span at residues 447-467; it reads LGSTPIHMLTLLLPCLFYFMY.

This sequence belongs to the paxM FAD-dependent monooxygenase family. FAD is required as a cofactor.

It localises to the membrane. It functions in the pathway secondary metabolite biosynthesis; terpenoid biosynthesis. Its function is as follows. FAD-dependent monooxygenase; part of the gene cluster A that mediates the biosynthesis of the fungal meroterpenoid acetoxydehydroaustin. The first step of the pathway is the synthesis of 3,5-dimethylorsellinic acid by the polyketide synthase ausA. 3,5-dimethylorsellinic acid is then prenylated by the polyprenyl transferase ausN. Further epoxidation by the FAD-dependent monooxygenase ausM and cyclization by the probable terpene cyclase ausL lead to the formation of protoaustinoid A. Protoaustinoid A is then oxidized to spiro-lactone preaustinoid A3 by the combined action of the FAD-binding monooxygenases ausB and ausC, and the dioxygenase ausE. Acid-catalyzed keto-rearrangement and ring contraction of the tetraketide portion of preaustinoid A3 by ausJ lead to the formation of preaustinoid A4. The aldo-keto reductase ausK, with the help of ausH, is involved in the next step by transforming preaustinoid A4 into isoaustinone which is in turn hydroxylated by the P450 monooxygenase ausI to form austinolide. The cytochrome P450 monooxygenase ausG then modifies austinolide to austinol. Austinol is further acetylated to austin by the O-acetyltransferase ausP, which spontaneously changes to dehydroaustin. The cytochrome P450 monooxygenase then converts dehydroaustin is into 7-dehydrodehydroaustin. The hydroxylation catalyzed by ausR permits the second O-acetyltransferase ausQ to add an additional acetyl group to the molecule, leading to the formation of acetoxydehydroaustin. Due to genetic rearrangements of the clusters and the subsequent loss of some enzymes, the end product of the Penicillium brasilianum austinoid biosynthesis clusters is acetoxydehydroaustin. The polypeptide is FAD-dependent monooxygenase ausM (Penicillium brasilianum).